The sequence spans 273 residues: 4-hydroxy-tetrahydrodipicolinate reductase (273 aa).

NAD(+) is bound by residues 12-17 and E38; that span reads GAGGRM. R39 is an NADP(+) binding site. NAD(+) is bound by residues 102 to 104 and 126 to 129; these read GTT and AANF. H159 serves as the catalytic Proton donor/acceptor. H160 serves as a coordination point for (S)-2,3,4,5-tetrahydrodipicolinate. K163 functions as the Proton donor in the catalytic mechanism. 169–170 lines the (S)-2,3,4,5-tetrahydrodipicolinate pocket; sequence GT.

The protein belongs to the DapB family. As to quaternary structure, homotetramer.

The protein localises to the cytoplasm. The catalysed reaction is (S)-2,3,4,5-tetrahydrodipicolinate + NAD(+) + H2O = (2S,4S)-4-hydroxy-2,3,4,5-tetrahydrodipicolinate + NADH + H(+). It catalyses the reaction (S)-2,3,4,5-tetrahydrodipicolinate + NADP(+) + H2O = (2S,4S)-4-hydroxy-2,3,4,5-tetrahydrodipicolinate + NADPH + H(+). It participates in amino-acid biosynthesis; L-lysine biosynthesis via DAP pathway; (S)-tetrahydrodipicolinate from L-aspartate: step 4/4. Its function is as follows. Catalyzes the conversion of 4-hydroxy-tetrahydrodipicolinate (HTPA) to tetrahydrodipicolinate. The sequence is that of 4-hydroxy-tetrahydrodipicolinate reductase from Salmonella paratyphi A (strain ATCC 9150 / SARB42).